Here is a 201-residue protein sequence, read N- to C-terminus: 3-isopropylmalate dehydratase small subunit (201 aa).

The protein belongs to the LeuD family. LeuD type 1 subfamily. In terms of assembly, heterodimer of LeuC and LeuD.

The enzyme catalyses (2R,3S)-3-isopropylmalate = (2S)-2-isopropylmalate. The protein operates within amino-acid biosynthesis; L-leucine biosynthesis; L-leucine from 3-methyl-2-oxobutanoate: step 2/4. Its function is as follows. Catalyzes the isomerization between 2-isopropylmalate and 3-isopropylmalate, via the formation of 2-isopropylmaleate. The polypeptide is 3-isopropylmalate dehydratase small subunit (Azorhizobium caulinodans (strain ATCC 43989 / DSM 5975 / JCM 20966 / LMG 6465 / NBRC 14845 / NCIMB 13405 / ORS 571)).